A 64-amino-acid chain; its full sequence is Translation machinery-associated protein 7 homolog (64 aa).

A disordered region spans residues 1 to 64 (MSGREGGKKK…QGGIKKSGKK (64 aa)). A coiled-coil region spans residues 21-50 (EMDEDTAAFKAKQKEQQKALEAAKQKATKG). Residues 32-44 (KQKEQQKALEAAK) show a composition bias toward basic and acidic residues.

It belongs to the TMA7 family.

The protein is Translation machinery-associated protein 7 homolog of Anopheles gambiae (African malaria mosquito).